Reading from the N-terminus, the 335-residue chain is Lipase chaperone (335 aa).

A helical transmembrane segment spans residues 7-23 (LLPLAIALGLGFFIARP).

This sequence belongs to the lipase chaperone family.

The protein localises to the cell inner membrane. In terms of biological role, may be involved in the folding of the extracellular lipase during its passage through the periplasm. In Ectopseudomonas mendocina (Pseudomonas mendocina), this protein is Lipase chaperone (lifO).